The primary structure comprises 233 residues: Orotidine 5'-phosphate decarboxylase (233 aa).

Residues Asp-11, Lys-34, 61-70, Thr-117, Arg-179, Gln-189, Gly-209, and Arg-210 each bind substrate; that span reads DLKLHDIPNT. Lys-63 serves as the catalytic Proton donor.

It belongs to the OMP decarboxylase family. Type 1 subfamily. In terms of assembly, homodimer.

The enzyme catalyses orotidine 5'-phosphate + H(+) = UMP + CO2. It participates in pyrimidine metabolism; UMP biosynthesis via de novo pathway; UMP from orotate: step 2/2. Its function is as follows. Catalyzes the decarboxylation of orotidine 5'-monophosphate (OMP) to uridine 5'-monophosphate (UMP). This Streptococcus agalactiae serotype V (strain ATCC BAA-611 / 2603 V/R) protein is Orotidine 5'-phosphate decarboxylase.